The chain runs to 170 residues: Photosystem II extrinsic protein V (170 aa).

The signal sequence occupies residues 1 to 33 (MASLFSTLQRSLKGLLILVPVLIGLVLASPAEA). Heme c-binding residues include Cys-70, Cys-73, His-74, and Met-137.

Belongs to the cytochrome c family. PsbV subfamily. In terms of assembly, PSII is composed of 1 copy each of membrane proteins PsbA, PsbB, PsbC, PsbD, PsbE, PsbF, PsbH, PsbI, PsbJ, PsbK, PsbL, PsbM, PsbT, PsbX, PsbY, PsbZ, Psb30/Ycf12, peripheral proteins PsbO, CyanoQ (PsbQ), PsbU, PsbV and a large number of cofactors. It forms dimeric complexes. Heme c is required as a cofactor.

It localises to the cellular thylakoid membrane. Functionally, one of the extrinsic, lumenal subunits of photosystem II (PSII). PSII is a light-driven water plastoquinone oxidoreductase, using light energy to abstract electrons from H(2)O, generating a proton gradient subsequently used for ATP formation. The extrinsic proteins stabilize the structure of photosystem II oxygen-evolving complex (OEC), the ion environment of oxygen evolution and protect the OEC against heat-induced inactivation. Low-potential cytochrome c that plays a role in the OEC of PSII. The chain is Photosystem II extrinsic protein V from Parasynechococcus marenigrum (strain WH8102).